We begin with the raw amino-acid sequence, 95 residues long: MRHYELMVILDPSLDERTVAPSLDTFLNVVRQDGGKIDKVDVWGKRRLAYEILKHSEGIYAVIDISATPATVAELDRQLGLNESVLRTKVLRHNK.

This sequence belongs to the bacterial ribosomal protein bS6 family.

Binds together with bS18 to 16S ribosomal RNA. This chain is Small ribosomal subunit protein bS6, found in Rhodococcus jostii (strain RHA1).